The chain runs to 600 residues: MTMTLHTKASGMALLHQIQGNELEPLNRPQLKMPMERALGEVYVDNSKPAVFNYPEGAAYEFNAAAAAAAAGASAPVYGQSSITYGPGSEAAAFGANSLGAFPQLNSVSPSPLMLLHPPPHVSPFLHPHGHQVPYYLENEPSAYAVRDTGPPAFYRSNSDNRRQNGRERLSSSSEKGNMIMESAKETRYCAVCNDYASGYHYGVWSCEGCKAFFKRSIQGHNDYMCPATNQCTIDKNRRKSCQACRLRKCYEVGMMKGGIRKDRRGGRMLKHKRQRDDLEGRNEMGTSGDMRAANLWPSPLVIKHTKKNSPALSLTADQMVSALLDAEPPLIYSEYDPSRPFSEASMMGLLTNLADRELVHMINWAKRVPGFGDLNLHDQVHLLECAWLEILMIGLVWRSMEHPGKLLFAPNLLLDRNQGKCVEGMVEIFDMLLATSSRFRMMNLQGEEFVCLKSIILLNSGVYTFLSSTLKSLEEKDHIHRVLDKINDTLIHLMAKAGLTLQQQHRRLAQLLLILSHIRHMSNKGMEHLYNMKCKNVVPLYDLLLEMLDAHRLHAPASRMGVPPEEPSQSQLTTTSSTSAHSLQTYYIPPEAEGFPNTI.

The tract at residues 1–189 is modulating (transactivation AF-1); mediates interaction with MACROD1; it reads MTMTLHTKAS…IMESAKETRY (189 aa). Ser10 is a glycosylation site (O-linked (GlcNAc) serine). Positions 35-47 are required for interaction with NCOA1; sequence MERALGEVYVDNS. The interaction with DDX5; self-association stretch occupies residues 35-179; sequence MERALGEVYV…LSSSSEKGNM (145 aa). A phosphoserine; by CDK2 mark is found at Ser109 and Ser111. Ser123 bears the Phosphoserine mark. Positions 148–177 are disordered; sequence DTGPPAFYRSNSDNRRQNGRERLSSSSEKG. Basic and acidic residues predominate over residues 159 to 170; it reads SDNRRQNGRERL. The residue at position 172 (Ser172) is a Phosphoserine; by CK2. 2 NR C4-type zinc fingers span residues 190–210 and 226–250; these read CAVC…CEGC and CPAT…LRKC. Positions 190–255 form a DNA-binding region, nuclear receptor; sequence CAVCNDYASG…RLRKCYEVGM (66 aa). The mediates interaction with DNTTIP2 stretch occupies residues 190 to 315; that stretch reads CAVCNDYASG…TKKNSPALSL (126 aa). A hinge region spans residues 256–315; it reads MKGGIRKDRRGGRMLKHKRQRDDLEGRNEMGTSGDMRAANLWPSPLVIKHTKKNSPALSL. Position 265 is an asymmetric dimethylarginine; by PRMT1 (Arg265). Positions 267–600 are interaction with AKAP13; that stretch reads GRMLKHKRQR…PEAEGFPNTI (334 aa). A self-association region spans residues 269 to 600; that stretch reads MLKHKRQRDD…PEAEGFPNTI (332 aa). Residues 316-552 form the NR LBD domain; sequence TADQMVSALL…DLLLEMLDAH (237 aa). Residues 316-600 form a transactivation AF-2 region; sequence TADQMVSALL…PEAEGFPNTI (285 aa). 17beta-estradiol contacts are provided by Glu358 and Arg399. Cys452 carries the S-palmitoyl cysteine lipid modification. His529 is a binding site for 17beta-estradiol. At Tyr542 the chain carries Phosphotyrosine; by Tyr-kinases. The interval 558 to 581 is disordered; sequence ASRMGVPPEEPSQSQLTTTSSTSA. Residues 569-581 show a composition bias toward low complexity; sequence SQSQLTTTSSTSA. The O-linked (GlcNAc) threonine glycan is linked to Thr576.

It belongs to the nuclear hormone receptor family. NR3 subfamily. In terms of assembly, interacts with BCAS3. Binds DNA as a homodimer. Can form a heterodimer with ESR2. Interacts with coactivator NCOA5. Interacts with PELP1, the interaction is enhanced by 17-beta-estradiol; the interaction increases ESR1 transcriptional activity. Interacts with NCOA7; the interaction is ligand-inducible. Interacts with AKAP13, CUEDC2, HEXIM1, KDM5A, MAP1S, SMARD1, and UBE1C. Interacts with MUC1; the interaction is stimulated by 7 beta-estradiol (E2) and enhances ESR1-mediated transcription. Interacts with DNTTIP2, and UIMC1. Interacts with KMT2D/MLL2. Interacts with ATAD2; the interaction is enhanced by estradiol. Interacts with KIF18A and LDB1. Interacts with RLIM (via its C-terminus). Interacts with MACROD1. Interacts with SH2D4A and PLCG. Interacts with SH2D4A; the interaction blocks binding to PLCG and inhibits estrogen-induced cell proliferation. Interacts with DYNLL1. Interacts with CCDC62; the interaction requires estradiol and appears to enhance the transcription of target genes. Interacts with NR2C1; the interaction prevents homodimerization of ESR1 and suppresses its transcriptional activity and cell growth. Interacts with DNAAF4. Interacts with PRMT2. Interacts with RBFOX2. Interacts with EP300; the interaction is estrogen-dependent and enhanced by CITED1. Interacts with CITED1; the interaction is estrogen-dependent. Interacts with FAM120B, FOXL2, PHB2 and SLC30A9. Interacts with coactivators NCOA3 and NCOA6. Interacts with STK3/MST2 only in the presence of SAV1 and vice-versa. Binds to CSNK1D. Interacts with NCOA2; NCOA2 can interact with ESR1 AF-1 and AF-2 domains simultaneously and mediate their transcriptional synergy. Interacts with DDX5. Interacts with NCOA1; the interaction seems to require a self-association of N-terminal and C-terminal regions. Interacts with ZNF366, DDX17, NFKB1, RELA, SP1 and SP3. Interacts with NRIP1. Interacts with GPER1; the interaction occurs in an estrogen-dependent manner. Interacts with TRIP4 (ufmylated); estrogen dependent. Interacts with LMTK3; the interaction phosphorylates ESR1 (in vitro) and protects it against proteasomal degradation. Interacts with CCAR2 (via N-terminus) in a ligand-independent manner. Interacts with ZFHX3. Interacts with SFR1 in a ligand-dependent and -independent manner. Interacts with DCAF13, LATS1 and DCAF1; regulates ESR1 ubiquitination and ubiquitin-mediated proteasomal degradation. Interacts (via DNA-binding domain) with POU4F2 (C-terminus); this interaction increases the estrogen receptor ESR1 transcriptional activity in a DNA- and ligand 17-beta-estradiol-independent manner. Interacts with ESRRB isoform 1. Interacts with UBE3A and WBP2. Interacts with GTF2B. Interacts with RBM39. In the absence of hormonal ligand, interacts with TACC1. Interacts with PI3KR1 or PI3KR2 and PTK2/FAK1. Interacts with SRC. Interacts with BAG1; the interaction is promoted in the absence of estradiol (17-beta-estradiol/E2). Interacts with and ubiquitinated by STUB1; the interaction is promoted in the absence of estradiol (17-beta-estradiol/E2). Interacts with NEDD8. Phosphorylated by cyclin A/CDK2 and CK1. Phosphorylation probably enhances transcriptional activity. Dephosphorylation at Ser-123 by PPP5C inhibits its transactivation activity. Phosphorylated by LMTK3 (in vitro). Post-translationally, ubiquitinated; regulated by LATS1 via DCAF1 it leads to ESR1 proteasomal degradation. Deubiquitinated by OTUB1. Ubiquitinated by STUB1/CHIP; in the CA1 hippocampal region following loss of endogenous circulating estradiol (17-beta-estradiol/E2). Ubiquitinated by UBR5, leading to its degradation: UBR5 specifically recognizes and binds ligand-bound ESR1 when it is not associated with coactivators (NCOAs). In presence of NCOAs, the UBR5-degron is not accessible, preventing its ubiquitination and degradation. In terms of processing, palmitoylated at Cys-452 by ZDHHC7 and ZDHHC21. This modification is required for plasma membrane targeting and for rapid intracellular signaling via ERK and AKT kinases and cAMP generation, but not for signaling mediated by the nuclear hormone receptor. Dimethylated by PRMT1 at Arg-265. The methylation may favor cytoplasmic localization. Demethylated by JMJD6 at Arg-265. Expressed in the CA1 region of the hippocampus, expression decreases with age (at protein level). Expressed in the uterus (at protein level).

The protein resides in the nucleus. It is found in the cytoplasm. Its subcellular location is the golgi apparatus. The protein localises to the cell membrane. Its function is as follows. Nuclear hormone receptor. The steroid hormones and their receptors are involved in the regulation of eukaryotic gene expression and affect cellular proliferation and differentiation in target tissues. Ligand-dependent nuclear transactivation involves either direct homodimer binding to a palindromic estrogen response element (ERE) sequence or association with other DNA-binding transcription factors, such as AP-1/c-Jun, c-Fos, ATF-2, Sp1 and Sp3, to mediate ERE-independent signaling. Ligand binding induces a conformational change allowing subsequent or combinatorial association with multiprotein coactivator complexes through LXXLL motifs of their respective components. Mutual transrepression occurs between the estrogen receptor (ER) and NF-kappa-B in a cell-type specific manner. Decreases NF-kappa-B DNA-binding activity and inhibits NF-kappa-B-mediated transcription from the IL6 promoter and displace RELA/p65 and associated coregulators from the promoter. Recruited to the NF-kappa-B response element of the CCL2 and IL8 promoters and can displace CREBBP. Present with NF-kappa-B components RELA/p65 and NFKB1/p50 on ERE sequences. Can also act synergistically with NF-kappa-B to activate transcription involving respective recruitment adjacent response elements; the function involves CREBBP. Can activate the transcriptional activity of TFF1. Also mediates membrane-initiated estrogen signaling involving various kinase cascades. Essential for MTA1-mediated transcriptional regulation of BRCA1 and BCAS3. Maintains neuronal survival in response to ischemic reperfusion injury when in the presence of circulating estradiol (17-beta-estradiol/E2). This is Estrogen receptor (Esr1) from Rattus norvegicus (Rat).